The primary structure comprises 499 residues: Probable cytosol aminopeptidase (499 aa).

Residues Lys269 and Asp274 each contribute to the Mn(2+) site. The active site involves Lys281. Mn(2+) is bound by residues Asp292, Asp351, and Glu353. Residue Arg355 is part of the active site.

It belongs to the peptidase M17 family. Mn(2+) is required as a cofactor.

Its subcellular location is the cytoplasm. The enzyme catalyses Release of an N-terminal amino acid, Xaa-|-Yaa-, in which Xaa is preferably Leu, but may be other amino acids including Pro although not Arg or Lys, and Yaa may be Pro. Amino acid amides and methyl esters are also readily hydrolyzed, but rates on arylamides are exceedingly low.. The catalysed reaction is Release of an N-terminal amino acid, preferentially leucine, but not glutamic or aspartic acids.. Its function is as follows. Presumably involved in the processing and regular turnover of intracellular proteins. Catalyzes the removal of unsubstituted N-terminal amino acids from various peptides. This chain is Probable cytosol aminopeptidase, found in Actinobacillus pleuropneumoniae serotype 3 (strain JL03).